We begin with the raw amino-acid sequence, 302 residues long: G-protein coupled receptor A5 (302 aa).

The Extracellular segment spans residues 1–20 (MADSSNSSLNCTAIHDQTVL). The chain crosses the membrane as a helical span at residues 21–41 (ILGQVFNSVWLFISVIFLYIF). The Cytoplasmic portion of the chain corresponds to 42 to 50 (ACKLCFRPR). Residues 51–71 (IYLWLSFYTLGFMLWVLCKVL) form a helical membrane-spanning segment. Residues 72–81 (QEYVTGKFKC) are Extracellular-facing. A helical transmembrane segment spans residues 82–102 (VITNCIGDFCLVFLSCIMLGI). Topologically, residues 103-122 (MLDRYLKIQGTLRGGMKDIH) are cytoplasmic. The chain crosses the membrane as a helical span at residues 123 to 143 (IGIFVSASCFGSLMIALLDGL). Residues 144 to 173 (HMGDSEKLQFNGTESFKCLPATSVSSYKAQ) lie on the Extracellular side of the membrane. The helical transmembrane segment at 174-194 (LMFKSIFCIICIIMCLILTCL) threads the bilayer. The Cytoplasmic segment spans residues 195–208 (TAKKVLGTRLRKKY). A helical membrane pass occupies residues 209–229 (VIVGNVGLLSFVNILLWVMIA). The Extracellular segment spans residues 230-249 (CGLLKQALESNLSLCPTKQS). A helical transmembrane segment spans residues 250 to 270 (TYIYPYTMPVTVIFVLVIYLF). Residues 271–302 (SSTHMKNAMRKSGQIRHSLSSPNQVQSSFRLV) lie on the Cytoplasmic side of the membrane.

It belongs to the G-protein coupled receptor 1 family.

The protein localises to the host cell membrane. It is found in the host endoplasmic reticulum membrane. Functionally, acts as a viral G-protein coupled receptor that constitutively activates host alphai-type G-proteins, thereby inhibiting host forskolin-triggered CREB activation. The polypeptide is G-protein coupled receptor A5 (A5) (Connochaetes taurinus (Blue wildebeest)).